We begin with the raw amino-acid sequence, 233 residues long: Aquaglyceroporin AqpS (233 aa).

2 consecutive transmembrane segments (helical) span residues 11 to 31 (VAEALGTGLLVAAVVGSGIMA) and 40 to 60 (LALVANTIATGAILVVLVTIL). Residues 69 to 71 (NPA) carry the NPA 1 motif. 3 helical membrane passes run 89–109 (AYVIAQVAGAIAGTALAHLMF), 125–145 (AQWLSEGVAAFGLVATILAGI), and 152–172 (VPWLVGLYITAAYWFTASTSF). An NPA 2 motif is present at residues 174–176 (NPA). A helical membrane pass occupies residues 193-213 (GDLPGFVIAELLGAVCALALM).

The protein belongs to the MIP/aquaporin (TC 1.A.8) family. NIP (TC 1.A.8.12) subfamily.

It is found in the cell inner membrane. Functionally, involved in resistance to arsenic. Facilitates efflux of arsenite [As(III)]. Arsenate [As(V)] enters the cell through phosphate transport systems and is reduced to arsenite by the arsenate reductase ArsC. Internally generated arsenite flows out of the cell by downhill movement through AqpS. Can also transport the highly toxic methylarsenite [MAs(III)] and the relatively non-toxic methylarsenate [MAs(V)]. May be a component of an methylarsenite resistance pathway in which methylarsenite enters cells via AqpS, is oxidized by ArsH to methylarsenate, which exits the cells via AqpS. This pathway may confer a selective advantage for R.melliloti to grow in the presence of environmental methylarsenicals. This is Aquaglyceroporin AqpS from Rhizobium meliloti (strain 1021) (Ensifer meliloti).